The sequence spans 354 residues: GTPase Obg (354 aa).

In terms of domain architecture, Obg spans 1-159 (MKFVDEVKIH…RDLVLELKLL (159 aa)). The 174-residue stretch at 160-333 (ADVGIVGYPN…LLDAVGRALF (174 aa)) folds into the OBG-type G domain. GTP contacts are provided by residues 166–173 (GYPNAGKS), 191–195 (FTTLT), 212–215 (DIPG), 283–286 (TKID), and 314–316 (SAV). Residues Ser-173 and Thr-193 each coordinate Mg(2+).

Belongs to the TRAFAC class OBG-HflX-like GTPase superfamily. OBG GTPase family. As to quaternary structure, monomer. Mg(2+) is required as a cofactor.

It localises to the cytoplasm. An essential GTPase which binds GTP, GDP and possibly (p)ppGpp with moderate affinity, with high nucleotide exchange rates and a fairly low GTP hydrolysis rate. Plays a role in control of the cell cycle, stress response, ribosome biogenesis and in those bacteria that undergo differentiation, in morphogenesis control. In Anaeromyxobacter sp. (strain K), this protein is GTPase Obg.